Here is a 59-residue protein sequence, read N- to C-terminus: Temporin-CDYd (59 aa).

An N-terminal signal peptide occupies residues 1 to 22 (MFTLKKSMLLLLFLGTISLTLC). Positions 23 to 42 (EEERDANEEEENGGEVKEEE) are excised as a propeptide.

It belongs to the frog skin active peptide (FSAP) family. Temporin subfamily. In terms of tissue distribution, expressed by the skin glands.

It localises to the secreted. Antimicrobial peptide. The polypeptide is Temporin-CDYd (Rana dybowskii (Dybovsky's frog)).